Consider the following 146-residue polypeptide: Large ribosomal subunit protein uL15 (146 aa).

Positions 1–65 (MSDIQLNSLK…GQMPLQRRLP (65 aa)) are disordered. Gly residues predominate over residues 24 to 34 (RGIGSGLGKTA).

It belongs to the universal ribosomal protein uL15 family. Part of the 50S ribosomal subunit.

Binds to the 23S rRNA. This chain is Large ribosomal subunit protein uL15, found in Bordetella avium (strain 197N).